The sequence spans 201 residues: NF-kappa-B inhibitor-interacting Ras-like protein (201 aa).

The segment at 3-201 (NAKIGKVGKV…VMQNRQKSEA (199 aa)) is small GTPase-like. 16-23 (GMKGVGKT) contacts GTP. Residues 40–48 (LHPTIEDIY) carry the Effector region motif. GTP contacts are provided by residues 67 to 71 (DTAGL) and 127 to 130 (NVRA).

The protein belongs to the small GTPase superfamily. Ras family. KappaB-Ras subfamily. In terms of assembly, interacts with NF-kappa-B inhibitor cactus.

Atypical Ras-like protein that may act as a regulator of NF-kappa-B activity, possibly by preventing the degradation of NF-kappa-B inhibitor cactus. The polypeptide is NF-kappa-B inhibitor-interacting Ras-like protein (kappaB-Ras) (Drosophila melanogaster (Fruit fly)).